The chain runs to 382 residues: Alkanesulfonate monooxygenase (382 aa).

The protein belongs to the SsuD family.

It catalyses the reaction an alkanesulfonate + FMNH2 + O2 = an aldehyde + FMN + sulfite + H2O + 2 H(+). Its function is as follows. Catalyzes the desulfonation of aliphatic sulfonates. The protein is Alkanesulfonate monooxygenase of Pseudomonas putida (strain ATCC 700007 / DSM 6899 / JCM 31910 / BCRC 17059 / LMG 24140 / F1).